The sequence spans 161 residues: MPSMDIVSEVNEVELRNAVDNSVRELKGRFDFRGKEASIEYKDHVVTLTAEDDFQCRQLVDILRMQMSKRDVDPKSMDVDDKAVHSGKTFSLKVKFKEGIETLVAKKLVKLIKDSKLKVQVSIQGDSVRVTGKKRDDLQQVMALARESELGQPFQFNNFRD.

It belongs to the YajQ family.

Its function is as follows. Nucleotide-binding protein. This Shewanella pealeana (strain ATCC 700345 / ANG-SQ1) protein is Nucleotide-binding protein Spea_3114.